The sequence spans 125 residues: Histone H2A.v3 (125 aa).

The protein belongs to the histone H2A family. The nucleosome is a histone octamer containing two molecules each of H2A, H2B, H3 and H4 assembled in one H3-H4 heterotetramer and two H2A-H2B heterodimers. The octamer wraps approximately 147 bp of DNA.

It localises to the nucleus. Its subcellular location is the chromosome. Functionally, core component of nucleosome which plays a central role in DNA double strand break (DSB) repair. Nucleosomes wrap and compact DNA into chromatin, limiting DNA accessibility to the cellular machineries which require DNA as a template. Histones thereby play a central role in transcription regulation, DNA repair, DNA replication and chromosomal stability. DNA accessibility is regulated via a complex set of post-translational modifications of histones, also called histone code, and nucleosome remodeling. The chain is Histone H2A.v3 (H2Av3) from Dictyostelium discoideum (Social amoeba).